Consider the following 400-residue polypeptide: Argininosuccinate synthase (400 aa).

An ATP-binding site is contributed by 9–17; sequence AYSGGLDTS. An L-citrulline-binding site is contributed by Tyr-87. Gly-117 is a binding site for ATP. The L-aspartate site is built by Thr-119, Asn-123, and Asp-124. Position 123 (Asn-123) interacts with L-citrulline. 5 residues coordinate L-citrulline: Arg-127, Ser-176, Ser-185, Glu-261, and Tyr-273.

The protein belongs to the argininosuccinate synthase family. Type 1 subfamily. As to quaternary structure, homotetramer.

It is found in the cytoplasm. The enzyme catalyses L-citrulline + L-aspartate + ATP = 2-(N(omega)-L-arginino)succinate + AMP + diphosphate + H(+). It participates in amino-acid biosynthesis; L-arginine biosynthesis; L-arginine from L-ornithine and carbamoyl phosphate: step 2/3. This Chlorobium luteolum (strain DSM 273 / BCRC 81028 / 2530) (Pelodictyon luteolum) protein is Argininosuccinate synthase.